A 408-amino-acid polypeptide reads, in one-letter code: Echinulin prenyltransferase 2 (408 aa).

Dimethylallyl diphosphate contacts are provided by arginine 94, lysine 181, tyrosine 183, arginine 248, lysine 250, tyrosine 252, glutamine 334, tyrosine 336, tyrosine 400, and tyrosine 404.

It belongs to the tryptophan dimethylallyltransferase family.

It catalyses the reaction preechinulin + dimethylallyl diphosphate = tardioxopiperazine B + diphosphate. It carries out the reaction preechinulin + dimethylallyl diphosphate = tardioxopiperazine A + diphosphate. The enzyme catalyses tardioxopiperazine A + dimethylallyl diphosphate = echinulin + diphosphate. The catalysed reaction is tardioxopiperazine A + dimethylallyl diphosphate = variecolorin L + diphosphate. It catalyses the reaction neoechinulin A + dimethylallyl diphosphate = variecolorin G + diphosphate. It carries out the reaction neoechinulin A + dimethylallyl diphosphate = isoechinulin A + diphosphate. The enzyme catalyses isoechinulin A + dimethylallyl diphosphate = dehydroechinulin + diphosphate. The catalysed reaction is neoechinulin B + dimethylallyl diphosphate = isoechinulin B + diphosphate. It functions in the pathway secondary metabolite biosynthesis. Its pathway is alkaloid biosynthesis. Prenyltransferase; part of the gene cluster that mediates the biosynthesis of echinulin family alkaloid. The pathway begins with the biosynthesis of the cyclic dipeptide cyclo-L-Trp-L-Ala (cyclo-TA) by the NRPS echPS via condensation of L-alanine and L-tryptophan. The prenyltransferase echPT1 then catalyzes the first prenylation step, a reverse prenylation reaction at C2, to yield preechinulin. Preechinulin is the substrate of the cytochrome P450 monooxygenase echP450 that catalyzes the formation of the double bond between C10 and C11 to produce neoechulin A. The unique prenyltransferase echPT2 functions as a competitive enzyme with echP450 for preechinulin metabolization and uses preechinulin for effective regiospecific prenylations. Preechinulin is prenylated by echPT2 at C5 or C7. C7-prenylation leads to accumulation of tardioxopiperazine B without further modification by echPT2. In contrast, the C5-prenylated tardioxopiperazine A can be prenylated again by echPT2, predominantly at C7 to form echinulin or less frequently at C4 to give variecolorin L. EchPT2 also accepts neoechilunin A to produce varlecolorin G (prenylation at C5) or isoechinulin A (prenylation at C7). EchPT2 further converts isoechinulin A into dehydroechinulin. Moreover, a yet unidentified enzyme can also convert neoechilunin A into neoechilunin B by introducing a double bond between positions C14 and C17 and thus provides a further substrate to echPT2 for C5 and C7 prenylation. The chain is Echinulin prenyltransferase 2 from Aspergillus ruber (Eurotium rubrum).